We begin with the raw amino-acid sequence, 183 residues long: Dermatopontin (183 aa).

A Pyrrolidone carboxylic acid modification is found at Q1. At Y5 the chain carries Sulfotyrosine. 4 consecutive repeat copies span residues 8-61 (PYQQ…ACMP), 52-57 (DRQWNY), 62-117 (TPQS…CCRY), and 107-112 (DREWQF). The segment at 8-117 (PYQQYHDYSD…REWQFYCCRY (110 aa)) is 2 X 53-55 AA tandem repeats. 5 cysteine pairs are disulfide-bonded: C32-C59, C72-C114, C88-C115, C121-C178, and C125-C171. Positions 52 to 168 (DRQWNYACMP…AVERDRQWKF (117 aa)) are 3 X 6 AA tandem repeats of D-R-[EQ]-W-[NQK]-[FY]. Y144, Y146, Y148, and Y149 each carry sulfotyrosine. One copy of the 2-3 repeat lies at 163–168 (DRQWKF). A Sulfotyrosine modification is found at Y176.

Belongs to the dermatopontin family. Interacts with TGFB1, DCN and collagen. In terms of processing, sulfated on tyrosine residue(s). As to expression, detected in skin, skeletal muscle, heart, lung, articular cartilage, long bone and calvaria. Smaller amounts detected in kidney. Not detected in brain, liver or spleen.

The protein resides in the secreted. Its subcellular location is the extracellular space. It localises to the extracellular matrix. Seems to mediate adhesion by cell surface integrin binding. May serve as a communication link between the dermal fibroblast cell surface and its extracellular matrix environment. Enhances TGFB1 activity. Inhibits cell proliferation. Accelerates collagen fibril formation, and stabilizes collagen fibrils against low-temperature dissociation. This chain is Dermatopontin (DPT), found in Sus scrofa (Pig).